We begin with the raw amino-acid sequence, 225 residues long: tRNA (guanine-N(7)-)-methyltransferase (225 aa).

Residues E56, E81, D108, and D131 each contribute to the S-adenosyl-L-methionine site. D131 is a catalytic residue. Substrate-binding positions include K135, D167, and 204–207; that span reads TKFE.

This sequence belongs to the class I-like SAM-binding methyltransferase superfamily. TrmB family.

The enzyme catalyses guanosine(46) in tRNA + S-adenosyl-L-methionine = N(7)-methylguanosine(46) in tRNA + S-adenosyl-L-homocysteine. Its pathway is tRNA modification; N(7)-methylguanine-tRNA biosynthesis. Catalyzes the formation of N(7)-methylguanine at position 46 (m7G46) in tRNA. The sequence is that of tRNA (guanine-N(7)-)-methyltransferase from Legionella pneumophila (strain Lens).